The sequence spans 450 residues: Glucose-6-phosphate isomerase (450 aa).

Glu290 serves as the catalytic Proton donor. Residues His311 and Lys425 contribute to the active site.

Belongs to the GPI family.

It localises to the cytoplasm. It catalyses the reaction alpha-D-glucose 6-phosphate = beta-D-fructose 6-phosphate. It participates in carbohydrate biosynthesis; gluconeogenesis. The protein operates within carbohydrate degradation; glycolysis; D-glyceraldehyde 3-phosphate and glycerone phosphate from D-glucose: step 2/4. Its function is as follows. Catalyzes the reversible isomerization of glucose-6-phosphate to fructose-6-phosphate. This Lactiplantibacillus plantarum (strain ATCC BAA-793 / NCIMB 8826 / WCFS1) (Lactobacillus plantarum) protein is Glucose-6-phosphate isomerase.